The chain runs to 363 residues: Tetraacyldisaccharide 4'-kinase (363 aa).

78-85 (TVGGNGKT) contacts ATP.

Belongs to the LpxK family.

It carries out the reaction a lipid A disaccharide + ATP = a lipid IVA + ADP + H(+). The protein operates within glycolipid biosynthesis; lipid IV(A) biosynthesis; lipid IV(A) from (3R)-3-hydroxytetradecanoyl-[acyl-carrier-protein] and UDP-N-acetyl-alpha-D-glucosamine: step 6/6. Transfers the gamma-phosphate of ATP to the 4'-position of a tetraacyldisaccharide 1-phosphate intermediate (termed DS-1-P) to form tetraacyldisaccharide 1,4'-bis-phosphate (lipid IVA). In Wigglesworthia glossinidia brevipalpis, this protein is Tetraacyldisaccharide 4'-kinase.